The sequence spans 90 residues: uncharacterized protein (90 aa).

Positions 62–90 are disordered; that stretch reads RQLKKKQAYKPDPEASFSWSANTSTRGRR. Residues 78–90 are compositionally biased toward polar residues; that stretch reads FSWSANTSTRGRR.

This is an uncharacterized protein from Escherichia coli (strain K12).